Reading from the N-terminus, the 772-residue chain is Transducin-like enhancer protein 4 (772 aa).

Disordered stretches follow at residues 1–24 (MIRDLSKMYPQTRHPAPPHQPAQP) and 183–359 (LPIK…LTGL). The interval 1 to 137 (MIRDLSKMYP…AIIGQQLQAQ (137 aa)) is q domain. Residues 138 to 205 (HLSHAHGLPV…HQRDRDSIKS (68 aa)) are GP domain. Positions 184-203 (PIKDEKKHHDSDHQRDRDSI) are enriched in basic and acidic residues. Over residues 204 to 213 (KSSSVSPSAS) the composition is skewed to low complexity. Residues 206 to 275 (SSVSPSASFR…SPRGSPAHSP (70 aa)) are ccN domain. Composition is skewed to basic and acidic residues over residues 216–253 (AAEKHRNSTDYSSESKKQKTEEKDIAARYDSDGEKSDD) and 274–290 (SPRENGLDKPRLLKKDA). The segment at 276 to 452 (RENGLDKPRL…GGKPAYSFHV (177 aa)) is SP domain. Residues 291-306 (PISPASIASSSSTPSS) show a composition bias toward low complexity. Positions 307–316 (KSKEHSHNEK) are enriched in basic and acidic residues. Residues 318–329 (TTPVSKSNTPTP) are compositionally biased toward polar residues. WD repeat units lie at residues 484–522 (NHGEVVCAVTISNPTRHVYTGGKGCVKVWDISHPGNKSP), 530–569 (NRDNYIRSCRLLPDGRTLIVGGEASTLSIWDLAAPTPRIK), 574–613 (SSAPACYALAISPDSKVCFSCCSDGNIAVWDLHNQTLVRQ), 616–655 (GHTDGASCIDISNDGTKLWTGGLDNTVRSWDLREGRQLQQ), 657–696 (DFTSQIFSLGYCPTGEWLAVGMENSNVEVLHVTKPDKYQL), 698–737 (LHESCVLSLKFAHCGKWFVSTGKDNLLNAWRTPYGASIFQ), and 739–772 (KESSSVLSCDISVDDKYIVTGSGDKKATVYEVIY).

The protein belongs to the WD repeat Groucho/TLE family. In terms of assembly, interacts with tcf7, tcf7l1, ripply2.2/bowline, dscr6/ripply3 and foxd3. Associates with tbx6 in the presence of ripply2.2/bowline. Interacts with EFNB1 through the SP domain. Post-translationally, ubiquitinated by XIAP/BIRC4. As to expression, expressed at high levels in the spleen and ovary.

Its subcellular location is the nucleus. Functionally, transcriptional corepressor. Functions with ripply2.2/bowline to down regulate transcription of tbx6-dependent gene expression. Represses transcription of siamois and nodal3. The polypeptide is Transducin-like enhancer protein 4 (tle4) (Xenopus laevis (African clawed frog)).